Here is a 490-residue protein sequence, read N- to C-terminus: Cobyric acid synthase (490 aa).

The GATase cobBQ-type domain occupies 253-440; that stretch reads KLRVAAPAAP…LHGVFDEPAA (188 aa). C334 acts as the Nucleophile in catalysis. Residue H432 is part of the active site.

Belongs to the CobB/CobQ family. CobQ subfamily.

It functions in the pathway cofactor biosynthesis; adenosylcobalamin biosynthesis. Functionally, catalyzes amidations at positions B, D, E, and G on adenosylcobyrinic A,C-diamide. NH(2) groups are provided by glutamine, and one molecule of ATP is hydrogenolyzed for each amidation. The chain is Cobyric acid synthase from Chromobacterium violaceum (strain ATCC 12472 / DSM 30191 / JCM 1249 / CCUG 213 / NBRC 12614 / NCIMB 9131 / NCTC 9757 / MK).